The sequence spans 370 residues: Homospermidine synthase 2 (370 aa).

This sequence belongs to the deoxyhypusine synthase family. Homotetramer. Requires NAD(+) as cofactor. The N-terminus is blocked. In terms of tissue distribution, expressed in roots.

The enzyme catalyses putrescine + spermidine = sym-homospermidine + propane-1,3-diamine. It participates in alkaloid biosynthesis; pyrrolizidine alkaloid biosynthesis. Catalyzes the transfer of an aminobutyl unit from spermidine onto putrescine. The resulting polyamine homospermidine is a precursor in the biosynthesis of pyrrolizidine alkaloids. The polypeptide is Homospermidine synthase 2 (Senecio vernalis (Spring groundsel)).